A 178-amino-acid chain; its full sequence is Endothelin-2 (178 aa).

Positions 1 to 24 (MVSVPTTWCSVALALLVALHEGKG) are cleaved as a signal peptide. Residues 25–46 (QAAATLEQPASSSHAQGTHLRL) constitute a propeptide that is removed on maturation. Disulfide bonds link Cys49–Cys63 and Cys51–Cys59. Residues 70-178 (VNTPEQTAPY…RSTHSRWRKR (109 aa)) constitute a propeptide that is removed on maturation. The endothelin-like stretch occupies residues 96–111 (CQCSSARDPACATFCL). The disordered stretch occupies residues 159–178 (KRQQEAMREPRSTHSRWRKR). Positions 160 to 170 (RQQEAMREPRS) are enriched in basic and acidic residues.

This sequence belongs to the endothelin/sarafotoxin family. As to expression, expressed in lung, but not in placental stem villi vessels or cultured placental villi smooth muscle cells.

Its subcellular location is the secreted. Endothelins are endothelium-derived vasoconstrictor peptides. This chain is Endothelin-2 (EDN2), found in Homo sapiens (Human).